The sequence spans 617 residues: Proline--tRNA ligase (617 aa).

This sequence belongs to the class-II aminoacyl-tRNA synthetase family. ProS type 1 subfamily. Homodimer.

The protein resides in the cytoplasm. The enzyme catalyses tRNA(Pro) + L-proline + ATP = L-prolyl-tRNA(Pro) + AMP + diphosphate. Its function is as follows. Catalyzes the attachment of proline to tRNA(Pro) in a two-step reaction: proline is first activated by ATP to form Pro-AMP and then transferred to the acceptor end of tRNA(Pro). As ProRS can inadvertently accommodate and process non-cognate amino acids such as alanine and cysteine, to avoid such errors it has two additional distinct editing activities against alanine. One activity is designated as 'pretransfer' editing and involves the tRNA(Pro)-independent hydrolysis of activated Ala-AMP. The other activity is designated 'posttransfer' editing and involves deacylation of mischarged Ala-tRNA(Pro). The misacylated Cys-tRNA(Pro) is not edited by ProRS. The sequence is that of Proline--tRNA ligase from Treponema pallidum (strain Nichols).